Reading from the N-terminus, the 336-residue chain is tRNA N6-adenosine threonylcarbamoyltransferase (336 aa).

His-111 and His-115 together coordinate Fe cation. Residues 134-138 (LVSGG), Asp-167, Gly-180, and Asn-270 contribute to the substrate site. Asp-298 lines the Fe cation pocket.

The protein belongs to the KAE1 / TsaD family. The cofactor is Fe(2+).

The protein resides in the cytoplasm. The enzyme catalyses L-threonylcarbamoyladenylate + adenosine(37) in tRNA = N(6)-L-threonylcarbamoyladenosine(37) in tRNA + AMP + H(+). Its function is as follows. Required for the formation of a threonylcarbamoyl group on adenosine at position 37 (t(6)A37) in tRNAs that read codons beginning with adenine. Is involved in the transfer of the threonylcarbamoyl moiety of threonylcarbamoyl-AMP (TC-AMP) to the N6 group of A37, together with TsaE and TsaB. TsaD likely plays a direct catalytic role in this reaction. The chain is tRNA N6-adenosine threonylcarbamoyltransferase from Acinetobacter baumannii (strain AB307-0294).